The following is a 410-amino-acid chain: Adenosine receptor A2a (410 aa).

The Extracellular portion of the chain corresponds to 1–4 (MGSS). The chain crosses the membrane as a helical span at residues 5 to 29 (VYITVELAIAVLAILGNVLVCWAVW). Residues 30–39 (INSNLQNVTN) are Cytoplasmic-facing. The chain crosses the membrane as a helical span at residues 40-63 (FFVVSLAAADIAVGVLAIPFAITI). The Extracellular portion of the chain corresponds to 64-74 (STGFCAACHGC). 3 disulfides stabilise this stretch: C68–C154, C71–C143, and C74–C161. The helical transmembrane segment at 75–97 (LFFACFVLVLTQSSIFSLLAIAI) threads the bilayer. Over 98–117 (DRYIAIRIPLRYNGLVTGVR) the chain is Cytoplasmic. The helical transmembrane segment at 118–140 (AKGIIAICWVLSFAIGLTPMLGW) threads the bilayer. The Extracellular portion of the chain corresponds to 141-168 (NNCSQKDGNSTKTCGEGRVTCLFEDVVP). N-linked (GlcNAc...) asparagine glycosylation is found at N142 and N149. Residue E164 coordinates adenosine. A helical membrane pass occupies residues 169–193 (MNYMVYYNFFAFVLLPLLLMLAIYL). The Cytoplasmic segment spans residues 194–229 (RIFLAARRQLKQMESQPLPGERTRSTLQKEVHAAKS). The chain crosses the membrane as a helical span at residues 230–253 (LAIIVGLFALCWLPLHIINCFTFF). N248 is a binding site for adenosine. A disulfide bridge connects residues C254 and C257. At 254-261 (CSTCRHAP) the chain is on the extracellular side. Residues 262-285 (PWLMYLAIILSHSNSVVNPFIYAY) traverse the membrane as a helical segment. Positions 272 and 273 each coordinate adenosine. Topologically, residues 286–410 (RIREFRQTFR…SSWSSEFAPS (125 aa)) are cytoplasmic. Positions 322–410 (HSTEGEQVSL…SSWSSEFAPS (89 aa)) are interaction with GAS2L2. The segment at 344–410 (GSATHSGRRP…SSWSSEFAPS (67 aa)) is disordered. The segment covering 371-388 (RDVELPTQERQEGQEHPG) has biased composition (basic and acidic residues). Over residues 401–410 (SSWSSEFAPS) the composition is skewed to polar residues.

The protein belongs to the G-protein coupled receptor 1 family. Interacts (via cytoplasmic C-terminal domain) with USP4; the interaction is direct. May interact with DRD4. Interacts with NECAB2. Interacts (via cytoplasmic C-terminal domain) with GAS2L2; interaction enhances receptor-mediated adenylyl cyclase activity. Post-translationally, ubiquitinated. Deubiquitinated by USP4; leading to stabilization and expression at the cell surface. In terms of tissue distribution, expressed in striatal neurons (at protein level).

It is found in the cell membrane. Its function is as follows. Receptor for adenosine. The activity of this receptor is mediated by G proteins which activate adenylyl cyclase. The sequence is that of Adenosine receptor A2a (Adora2a) from Rattus norvegicus (Rat).